We begin with the raw amino-acid sequence, 241 residues long: Probable transcriptional regulatory protein RSc2190 (241 aa).

Belongs to the TACO1 family.

It localises to the cytoplasm. The sequence is that of Probable transcriptional regulatory protein RSc2190 from Ralstonia nicotianae (strain ATCC BAA-1114 / GMI1000) (Ralstonia solanacearum).